The chain runs to 185 residues: Peptidyl-tRNA hydrolase (185 aa).

Tyrosine 14 lines the tRNA pocket. The Proton acceptor role is filled by histidine 19. Residues phenylalanine 64, asparagine 66, and asparagine 112 each coordinate tRNA.

The protein belongs to the PTH family. Monomer.

Its subcellular location is the cytoplasm. The enzyme catalyses an N-acyl-L-alpha-aminoacyl-tRNA + H2O = an N-acyl-L-amino acid + a tRNA + H(+). In terms of biological role, hydrolyzes ribosome-free peptidyl-tRNAs (with 1 or more amino acids incorporated), which drop off the ribosome during protein synthesis, or as a result of ribosome stalling. Its function is as follows. Catalyzes the release of premature peptidyl moieties from peptidyl-tRNA molecules trapped in stalled 50S ribosomal subunits, and thus maintains levels of free tRNAs and 50S ribosomes. The sequence is that of Peptidyl-tRNA hydrolase from Lactobacillus johnsonii (strain CNCM I-12250 / La1 / NCC 533).